An 886-amino-acid polypeptide reads, in one-letter code: Receptor-like kinase TMK2 (886 aa).

The N-terminal stretch at 1–20 is a signal peptide; sequence MIAKNFLLLLCFIALVNVES. Residues 21–460 lie on the Extracellular side of the membrane; the sequence is SPDEAVMIAL…GKKASSNAGK (440 aa). Residue N41 is glycosylated (N-linked (GlcNAc...) asparagine). C48 and C56 are disulfide-bonded. LRR repeat units follow at residues 59–83, 84–106, 107–129, 131–155, 157–179, 182–206, 208–232, 233–254, 255–279, and 281–302; these read SNRV…LGKL, TSLT…LAGL, KSLV…FFSG, SSLQ…LENA, SLVD…LFEG, FSSL…FSDS, VQVL…LQKM, TSLT…DFSG, LVSL…LFEL, and SLSD…FTAP. 3 N-linked (GlcNAc...) asparagine glycosylation sites follow: N154, N167, and N202. N-linked (GlcNAc...) asparagine glycosylation occurs at N237. The N-linked (GlcNAc...) asparagine glycan is linked to N298. 2 cysteine pairs are disulfide-bonded: C315–C323 and C353–C361. LRR repeat units follow at residues 363–386, 387–410, and 411–438; these read GTDI…RFAD, FASL…ELAK, and LSNL…IVNT. Residues N377, N394, N401, N432, and N437 are each glycosylated (N-linked (GlcNAc...) asparagine). The helical transmembrane segment at 461-481 threads the bilayer; the sequence is IVGSVIGILLALLLIGVAIFF. The Cytoplasmic segment spans residues 482–886; sequence LVKKKMQYHK…ESTFKSGQGR (405 aa). Residues 547–827 enclose the Protein kinase domain; it reads FDEKNILGRG…HVVNVLVSLV (281 aa). Residues 553–561 and K575 each bind ATP; that span reads LGRGGFGIV. D676 functions as the Proton acceptor in the catalytic mechanism.

This sequence belongs to the protein kinase superfamily. Ser/Thr protein kinase family. In terms of tissue distribution, expressed in siliques and flowers.

The protein localises to the membrane. The enzyme catalyses L-seryl-[protein] + ATP = O-phospho-L-seryl-[protein] + ADP + H(+). It carries out the reaction L-threonyl-[protein] + ATP = O-phospho-L-threonyl-[protein] + ADP + H(+). Its function is as follows. Involved in auxin signal transduction and cell expansion and proliferation regulation. The chain is Receptor-like kinase TMK2 from Arabidopsis thaliana (Mouse-ear cress).